The following is a 77-amino-acid chain: Small ribosomal subunit protein bS18 (77 aa).

The protein belongs to the bacterial ribosomal protein bS18 family. In terms of assembly, part of the 30S ribosomal subunit. Forms a tight heterodimer with protein bS6.

In terms of biological role, binds as a heterodimer with protein bS6 to the central domain of the 16S rRNA, where it helps stabilize the platform of the 30S subunit. The sequence is that of Small ribosomal subunit protein bS18 from Desulforamulus reducens (strain ATCC BAA-1160 / DSM 100696 / MI-1) (Desulfotomaculum reducens).